A 944-amino-acid polypeptide reads, in one-letter code: Protein translocase subunit SecA (944 aa).

Residues glutamine 77, 95–99 (GEGKT), and aspartate 484 contribute to the ATP site. The disordered stretch occupies residues 920–944 (EQEKQTKKKKKKKPHDDETTKVKIG). A compositionally biased stretch (basic and acidic residues) spans 933–944 (PHDDETTKVKIG).

It belongs to the SecA family. Monomer and homodimer. Part of the essential Sec protein translocation apparatus which comprises SecA, SecYEG and auxiliary proteins SecDF. Other proteins may also be involved.

It localises to the cell membrane. The protein localises to the cytoplasm. It carries out the reaction ATP + H2O + cellular proteinSide 1 = ADP + phosphate + cellular proteinSide 2.. Its function is as follows. Part of the Sec protein translocase complex. Interacts with the SecYEG preprotein conducting channel. Has a central role in coupling the hydrolysis of ATP to the transfer of proteins into and across the cell membrane, serving as an ATP-driven molecular motor driving the stepwise translocation of polypeptide chains across the membrane. The sequence is that of Protein translocase subunit SecA from Mycoplasma capricolum subsp. capricolum (strain California kid / ATCC 27343 / NCTC 10154).